Reading from the N-terminus, the 576-residue chain is Protein HYPER-SENSITIVITY-RELATED 4 (576 aa).

Residues 55-75 (LATAKTVLTTAASVAATAMLA) traverse the membrane as a helical segment. Residue 306-313 (GPPGTGKS) participates in ATP binding. Residues 508–532 (DKAKTEKQELENKKKTKEGTDSVVK) form a disordered region.

This sequence belongs to the AAA ATPase family. BCS1 subfamily. Binds to the Yariv phenylglycoside (beta-D-Glc)(3). It depends on Mg(2+) as a cofactor.

The protein localises to the membrane. It carries out the reaction ATP + H2O = ADP + phosphate + H(+). The polypeptide is Protein HYPER-SENSITIVITY-RELATED 4 (Arabidopsis thaliana (Mouse-ear cress)).